A 200-amino-acid polypeptide reads, in one-letter code: Cysteine dioxygenase type 1 (200 aa).

Positions 86, 88, and 140 each coordinate Fe cation. Residues 93–157 (CFLKLLQGNL…TEPAVSLHLY (65 aa)) constitute a cross-link (3'-(S-cysteinyl)-tyrosine (Cys-Tyr)).

This sequence belongs to the cysteine dioxygenase family. As to quaternary structure, monomer. Fe(2+) is required as a cofactor. The cofactor is Ni(2+). Zn(2+) serves as cofactor. The thioether cross-link between Cys-93 and Tyr-157 plays a structural role through stabilizing the Fe(2+) ion, and prevents the production of highly damaging free hydroxyl radicals by holding the oxygen radical via hydroxyl hydrogen. Highest expression in liver. Also expressed in kidney, lung, brain and small intestine.

It catalyses the reaction L-cysteine + O2 = 3-sulfino-L-alanine + H(+). The protein operates within organosulfur biosynthesis; taurine biosynthesis; hypotaurine from L-cysteine: step 1/2. Catalyzes the oxidation of cysteine to cysteine sulfinic acid with addition of molecular dioxygen. The chain is Cysteine dioxygenase type 1 (Cdo1) from Mus musculus (Mouse).